Reading from the N-terminus, the 340-residue chain is Geranylgeranyl pyrophosphate synthase atmG (340 aa).

Residues 19 to 48 (NLDASYPTSSSLSTEPIDTRSSSPQGSAST) are compositionally biased toward polar residues. The tract at residues 19–51 (NLDASYPTSSSLSTEPIDTRSSSPQGSASTPVD) is disordered. The isopentenyl diphosphate site is built by K69, R72, and H101. D108 and D112 together coordinate Mg(2+). Residue R117 coordinates dimethylallyl diphosphate. Residue R118 coordinates isopentenyl diphosphate. Dimethylallyl diphosphate contacts are provided by K195, T196, and Q229. Residue D232 coordinates Mg(2+). Residues N236, K246, and K256 each coordinate dimethylallyl diphosphate.

Belongs to the FPP/GGPP synthase family. Mg(2+) serves as cofactor.

It carries out the reaction isopentenyl diphosphate + dimethylallyl diphosphate = (2E)-geranyl diphosphate + diphosphate. The enzyme catalyses isopentenyl diphosphate + (2E)-geranyl diphosphate = (2E,6E)-farnesyl diphosphate + diphosphate. It catalyses the reaction isopentenyl diphosphate + (2E,6E)-farnesyl diphosphate = (2E,6E,10E)-geranylgeranyl diphosphate + diphosphate. Functionally, geranylgeranyl pyrophosphate synthase; part of the ATM1 gene cluster that mediates the biosynthesis of aflatrem, a tremorgenic mycotoxin with acute neurotoxic effects. Synthesis of geranylgeranyl diphosphate (GGPP) by AtmG (a GGPP synthase) precedes condensation of GGPP with indole 3-glycerol phosphate, followed by epoxidation and cyclization by AtmM (a FAD-dependent monooxygenase) and AtmC (a prenyltransferase) to produce paspaline. AtmB is also essential for paspaline production, but its exact role has not been identified yet. AtmP, a cytochrome P450 monooxygenase, subsequently converts paspaline to 13-desoxypaxilline via PC-M6 by removal of the C-30 methyl group and oxidation at C-10. AtmQ, a cytochrome P450 monooxygenase, then catalyzes the oxidation of 13-desoxypaxilline, first at C-7 to produce paspalicine and then at C-13 to form paspalinine. Finally, AtmD prenylates paspalinine to form aflatrem. This Aspergillus flavus protein is Geranylgeranyl pyrophosphate synthase atmG.